The sequence spans 164 residues: MVDDSTRKTLSNIPLLQIRAGPREKDVWVQRLKEEYHALIMYVKNNKQSGSDWFRLESNKEGTKWFGKCWYMHNLLKYEFDVEFDIPVTYPTTAPEIALPELDGKTAKMYRGGKICLTDHFKPLWARNVPKFGIAHAMALGLAPWLAVEVPDLIEKGIITYKEK.

Catalysis depends on Cys116, which acts as the Glycyl thioester intermediate.

This sequence belongs to the ubiquitin-conjugating enzyme family. UFC1 subfamily.

Its function is as follows. E2-like enzyme which forms an intermediate with UFM1 via a thioester linkage. This chain is Ubiquitin-fold modifier-conjugating enzyme 1, found in Drosophila persimilis (Fruit fly).